A 124-amino-acid polypeptide reads, in one-letter code: Snaclec rhodocetin subunit delta (124 aa).

Disulfide bonds link Cys-1/Cys-12, Cys-29/Cys-120, and Cys-95/Cys-112. Positions 8-121 (YNGYCYRVFS…CEKTVSFVCK (114 aa)) constitute a C-type lectin domain.

The protein belongs to the snaclec family. Heterotetramer of subunit alpha, beta, gamma and delta; only the gamma and the delta subunits are disulfide-linked. Alpha-beta heterodimer and gamma-delta heterodimer associate orthogonally, giving a cruciform conformation. This heterotetramer may covalently dimerizes thanks to the gamma subunit. Expressed by the venom gland.

Its subcellular location is the secreted. In terms of biological role, potent inhibitor of collagen-induced platelet aggregation. It acts by binding to the integrin alpha2A domain and blocks collagen binding to integrin alpha-2/beta-1 (ITGA2/ITGB1). The gamma/delta subunits mainly contribute to this activity. The protein is Snaclec rhodocetin subunit delta of Calloselasma rhodostoma (Malayan pit viper).